The sequence spans 1621 residues: ALK tyrosine kinase receptor (1621 aa).

A signal peptide spans 1-18 (MGAAGFLWLLPPLLLAAA). Topologically, residues 19–1042 (SYSGAATDQR…PHLPLSLILS (1024 aa)) are extracellular. The interval 48–70 (RLQRKSLAVDFVVPSLFRVYARD) is heparin-binding region. Asn174, Asn248, Asn289, Asn328, Asn415, Asn428, Asn449, Asn567, Asn575, Asn631, and Asn673 each carry an N-linked (GlcNAc...) asparagine glycan. In terms of domain architecture, MAM 1 spans 268-431 (LECSFDFPCE…DFFALKNCSE (164 aa)). Positions 441-477 (LQSSFTCWNGTVLQLGQACDFHQDCAQGEDEGQLCSK) constitute an LDL-receptor class A domain. Residues 482 to 640 (FYCNFENGFC…NISISLDCYL (159 aa)) form the MAM 2 domain. Cys692 and Cys705 are oxidised to a cystine. The N-linked (GlcNAc...) asparagine glycan is linked to Asn713. Residues Cys787 and Cys798 are joined by a disulfide bond. Residues Asn812, Asn868, and Asn890 are each glycosylated (N-linked (GlcNAc...) asparagine). Cys910 and Cys932 are oxidised to a cystine. Asn990 carries an N-linked (GlcNAc...) asparagine glycan. 3 disulfide bridges follow: Cys991–Cys999, Cys994–Cys1010, and Cys1012–Cys1025. The tract at residues 991 to 1029 (CSHCEVDECHMDPESHKVICFCDHGTVLADDGVSCIVSP) is EGF-like. Residues 1043 to 1063 (VVTSALVAALVLAFSGIMIVY) traverse the membrane as a helical segment. The Cytoplasmic segment spans residues 1064-1621 (RRKHQELQAM…SKNKVTQPGP (558 aa)). Phosphotyrosine occurs at positions 1082, 1096, and 1100. The 277-residue stretch at 1120–1396 (ITLIRGLGHG…IEYCTQDPDV (277 aa)) folds into the Protein kinase domain. Residues 1126–1134 (LGHGAFGEV) and His1128 contribute to the ATP site. A Phosphotyrosine modification is found at Tyr1135. Residues Lys1154 and 1201–1203 (ELM) contribute to the ATP site. Asp1253 functions as the Proton acceptor in the catalytic mechanism. Position 1274 (Asp1274) interacts with ATP. Tyr1282 bears the Phosphotyrosine mark. Residues 1412 to 1556 (EEKVPMRPKD…WTGPGAGPRR (145 aa)) are disordered. Residues 1414–1423 (KVPMRPKDPE) show a composition bias toward basic and acidic residues. The span at 1441 to 1461 (SAAPQPAALTAPGPSVKKPPG) shows a compositional bias: low complexity. Residues 1462-1472 (AGAGAGAGAGA) are compositionally biased toward gly residues. A compositionally biased stretch (polar residues) spans 1506-1518 (NKPTSLWNPTYGS). Tyr1516 carries the phosphotyrosine modification. Over residues 1543-1552 (AEGGWTGPGA) the composition is skewed to gly residues.

It belongs to the protein kinase superfamily. Tyr protein kinase family. Insulin receptor subfamily. As to quaternary structure, homodimer; homodimerizes following heparin- and ligand-binding. Interacts with CBL, IRS1, PIK3R1 and PLCG1. Interacts with FRS2 and SHC1. Interacts with PTN and MDK. Phosphorylated at tyrosine residues by autocatalysis, which activates kinase activity. In cells not stimulated by a ligand, receptor protein tyrosine phosphatase beta and zeta complex (PTPRB/PTPRZ1) dephosphorylates ALK at the sites in ALK that are undergoing autophosphorylation through autoactivation. As to expression, mainly expressed in central nervous system (CNS) and other parts of the brain such as the paraventricular nucleus (PVN) of the hypothalamus. Expression is also found in peripheral nervous systems, eye, nasal epithelium, olfactory nerve, tongue, skin, tissue surrounding the esophagus, stomach, midgut, as well as testis and ovary.

It localises to the cell membrane. The catalysed reaction is L-tyrosyl-[protein] + ATP = O-phospho-L-tyrosyl-[protein] + ADP + H(+). With respect to regulation, activated upon ALKAL2 ligand-binding. ALKAL2-driven activation is coupled with heparin-binding. Following ligand-binding, homodimerizes and autophosphorylates, activating its kinase activity. Inactivated through dephosphorylation by receptor protein tyrosine phosphatase beta and zeta complex (PTPRB/PTPRZ1) when there is no stimulation by a ligand. Its function is as follows. Neuronal receptor tyrosine kinase that is essentially and transiently expressed in specific regions of the central and peripheral nervous systems and plays an important role in the genesis and differentiation of the nervous system. Also acts as a key thinness protein involved in the resistance to weight gain: in hypothalamic neurons, controls energy expenditure acting as a negative regulator of white adipose tissue lipolysis and sympathetic tone to fine-tune energy homeostasis. Following activation by ALKAL2 ligand at the cell surface, transduces an extracellular signal into an intracellular response. In contrast, ALKAL1 is not a potent physiological ligand for ALK. Ligand-binding to the extracellular domain induces tyrosine kinase activation, leading to activation of the mitogen-activated protein kinase (MAPK) pathway. Phosphorylates almost exclusively at the first tyrosine of the Y-x-x-x-Y-Y motif. Induces tyrosine phosphorylation of CBL, FRS2, IRS1 and SHC1, as well as of the MAP kinases MAPK1/ERK2 and MAPK3/ERK1. ALK activation may also be regulated by pleiotrophin (PTN) and midkine (MDK). PTN-binding induces MAPK pathway activation, which is important for the anti-apoptotic signaling of PTN and regulation of cell proliferation. MDK-binding induces phosphorylation of the ALK target insulin receptor substrate (IRS1), activates mitogen-activated protein kinases (MAPKs) and PI3-kinase, resulting also in cell proliferation induction. Drives NF-kappa-B activation, probably through IRS1 and the activation of the AKT serine/threonine kinase. Recruitment of IRS1 to activated ALK and the activation of NF-kappa-B are essential for the autocrine growth and survival signaling of MDK. The sequence is that of ALK tyrosine kinase receptor from Mus musculus (Mouse).